Here is an 804-residue protein sequence, read N- to C-terminus: Leucine--tRNA ligase (804 aa).

The short motif at 39 to 50 (PYPSGKGLHVGH) is the 'HIGH' region element. The 'KMSKS' region motif lies at 573-577 (KMSKS). K576 contributes to the ATP binding site.

This sequence belongs to the class-I aminoacyl-tRNA synthetase family.

The protein resides in the cytoplasm. It carries out the reaction tRNA(Leu) + L-leucine + ATP = L-leucyl-tRNA(Leu) + AMP + diphosphate. This chain is Leucine--tRNA ligase, found in Lactobacillus delbrueckii subsp. bulgaricus (strain ATCC 11842 / DSM 20081 / BCRC 10696 / JCM 1002 / NBRC 13953 / NCIMB 11778 / NCTC 12712 / WDCM 00102 / Lb 14).